Reading from the N-terminus, the 477-residue chain is Probable ribonuclease FAU-1 (477 aa).

The protein belongs to the FAU-1 family.

Functionally, probable RNase involved in rRNA stability through maturation and/or degradation of precursor rRNAs. Binds to RNA in loop regions with AU-rich sequences. In Staphylothermus marinus (strain ATCC 43588 / DSM 3639 / JCM 9404 / F1), this protein is Probable ribonuclease FAU-1.